The sequence spans 489 residues: Toxin coregulated pilus biosynthesis outer membrane protein C (489 aa).

Positions 1–16 are cleaved as a signal peptide; it reads MKKTIISTLVIGLVSG. A lipid anchor (N-palmitoyl cysteine) is attached at C17. A lipid anchor (S-diacylglycerol cysteine) is attached at C17. A run of 4 helical transmembrane segments spans residues 174-190, 294-308, 402-417, and 442-457; these read FSSSMQIGGTSGTSSGL, AISLSQVGGGLGASY, QLVSIGTAQGITLPTV, and NYIQNSNGVQLLGGGT.

The protein localises to the cell membrane. Involved in TCP pilus biogenesis. In Vibrio cholerae serotype O1 (strain ATCC 39315 / El Tor Inaba N16961), this protein is Toxin coregulated pilus biosynthesis outer membrane protein C (tcpC).